We begin with the raw amino-acid sequence, 103 residues long: Urease subunit beta (103 aa).

This sequence belongs to the urease beta subunit family. In terms of assembly, heterotrimer of UreA (gamma), UreB (beta) and UreC (alpha) subunits. Three heterotrimers associate to form the active enzyme.

It localises to the cytoplasm. The catalysed reaction is urea + 2 H2O + H(+) = hydrogencarbonate + 2 NH4(+). It participates in nitrogen metabolism; urea degradation; CO(2) and NH(3) from urea (urease route): step 1/1. In Streptomyces coelicolor (strain ATCC BAA-471 / A3(2) / M145), this protein is Urease subunit beta.